We begin with the raw amino-acid sequence, 387 residues long: Involucrin (387 aa).

2 disordered regions span residues 1–319 (MSQQ…VHLG) and 347–387 (VCIP…LKQE). Residues 28 to 37 (NTQQDQMKQP) are compositionally biased toward polar residues. Over residues 62-71 (QVPEQECEPQ) the composition is skewed to low complexity. 4 stretches are compositionally biased toward basic and acidic residues: residues 85 to 96 (KQQEPQEQEVHP), 104 to 115 (QEQEAHLGKKQE), 147 to 179 (QEVH…KQLQ), and 231 to 245 (QLEK…ELHL).

Belongs to the involucrin family. As to quaternary structure, directly or indirectly cross-linked to cornifelin (CNFN). Substrate of transglutaminase. Specific glutamines or lysines are cross-linked to keratins, desmoplakin and to inter involucrin molecules. In terms of tissue distribution, keratinocytes of epidermis and other stratified squamous epithelia.

The protein resides in the cytoplasm. Its function is as follows. Part of the insoluble cornified cell envelope (CE) of stratified squamous epithelia. The sequence is that of Involucrin (IVL) from Cephalopachus bancanus (Western tarsier).